The sequence spans 231 residues: Large ribosomal subunit protein uL1 (231 aa).

The protein belongs to the universal ribosomal protein uL1 family. Part of the 50S ribosomal subunit.

Binds directly to 23S rRNA. The L1 stalk is quite mobile in the ribosome, and is involved in E site tRNA release. Its function is as follows. Protein L1 is also a translational repressor protein, it controls the translation of the L11 operon by binding to its mRNA. This chain is Large ribosomal subunit protein uL1, found in Staphylococcus epidermidis (strain ATCC 35984 / DSM 28319 / BCRC 17069 / CCUG 31568 / BM 3577 / RP62A).